The chain runs to 315 residues: 4-hydroxy-3-methylbut-2-enyl diphosphate reductase (315 aa).

Residue cysteine 18 participates in [4Fe-4S] cluster binding. Histidine 47 and histidine 80 together coordinate (2E)-4-hydroxy-3-methylbut-2-enyl diphosphate. Histidine 47 and histidine 80 together coordinate dimethylallyl diphosphate. The isopentenyl diphosphate site is built by histidine 47 and histidine 80. Cysteine 102 contacts [4Fe-4S] cluster. Residue histidine 130 participates in (2E)-4-hydroxy-3-methylbut-2-enyl diphosphate binding. Histidine 130 contributes to the dimethylallyl diphosphate binding site. Residue histidine 130 coordinates isopentenyl diphosphate. Glutamate 132 (proton donor) is an active-site residue. Threonine 171 provides a ligand contact to (2E)-4-hydroxy-3-methylbut-2-enyl diphosphate. Cysteine 201 lines the [4Fe-4S] cluster pocket. Residues serine 229, serine 230, asparagine 231, and serine 274 each contribute to the (2E)-4-hydroxy-3-methylbut-2-enyl diphosphate site. Positions 229, 230, 231, and 274 each coordinate dimethylallyl diphosphate. 4 residues coordinate isopentenyl diphosphate: serine 229, serine 230, asparagine 231, and serine 274.

Belongs to the IspH family. [4Fe-4S] cluster is required as a cofactor.

The enzyme catalyses isopentenyl diphosphate + 2 oxidized [2Fe-2S]-[ferredoxin] + H2O = (2E)-4-hydroxy-3-methylbut-2-enyl diphosphate + 2 reduced [2Fe-2S]-[ferredoxin] + 2 H(+). It carries out the reaction dimethylallyl diphosphate + 2 oxidized [2Fe-2S]-[ferredoxin] + H2O = (2E)-4-hydroxy-3-methylbut-2-enyl diphosphate + 2 reduced [2Fe-2S]-[ferredoxin] + 2 H(+). It participates in isoprenoid biosynthesis; dimethylallyl diphosphate biosynthesis; dimethylallyl diphosphate from (2E)-4-hydroxy-3-methylbutenyl diphosphate: step 1/1. It functions in the pathway isoprenoid biosynthesis; isopentenyl diphosphate biosynthesis via DXP pathway; isopentenyl diphosphate from 1-deoxy-D-xylulose 5-phosphate: step 6/6. Its function is as follows. Catalyzes the conversion of 1-hydroxy-2-methyl-2-(E)-butenyl 4-diphosphate (HMBPP) into a mixture of isopentenyl diphosphate (IPP) and dimethylallyl diphosphate (DMAPP). Acts in the terminal step of the DOXP/MEP pathway for isoprenoid precursor biosynthesis. This is 4-hydroxy-3-methylbut-2-enyl diphosphate reductase from Hyphomonas neptunium (strain ATCC 15444).